Consider the following 80-residue polypeptide: Conotoxin VnMSGL-0123 (80 aa).

Residues 1–20 form the signal peptide; sequence MSGLGIMVLTLLLLVSMATS. Residues 21-44 constitute a propeptide that is removed on maturation; sequence HQDGGGKQATQRDAINVRRRRSIT. 3 disulfides stabilise this stretch: C53–C65, C57–C74, and C64–C78. The residue at position 79 (F79) is a Phenylalanine amide.

Belongs to the conotoxin O3 superfamily. In terms of tissue distribution, expressed by the venom duct.

The protein localises to the secreted. The protein is Conotoxin VnMSGL-0123 of Conus ventricosus (Mediterranean cone).